The primary structure comprises 684 residues: Frizzled-8 (684 aa).

Residues 1 to 27 (MEWGYLLEVTSLLAALAVLQRSSGAAA) form the signal peptide. Topologically, residues 28–271 (ASAKELACQE…NPFFSQDERA (244 aa)) are extracellular. Residues 30 to 151 (AKELACQEIT…GNPDTLCMDY (122 aa)) form the FZ domain. 5 disulfide bridges follow: cysteine 35/cysteine 96, cysteine 43/cysteine 89, cysteine 80/cysteine 118, cysteine 107/cysteine 148, and cysteine 111/cysteine 135. The N-linked (GlcNAc...) asparagine glycan is linked to asparagine 49. Residue 71–78 (QFWPLVEI) coordinates hexadecanoate. Residues 95-100 (ICLEDY) form a wnt-binding region. Positions 147 to 152 (LCMDYN) are wnt-binding. N-linked (GlcNAc...) asparagine glycosylation is present at asparagine 152. Positions 155-222 (DLTTAAPSPP…KARPPGGGAA (68 aa)) are disordered. Pro residues predominate over residues 161 to 175 (PSPPRRLPPPQPGEQ). 2 stretches are compositionally biased toward low complexity: residues 176 to 186 (PPSGSGHSRPP) and 199 to 222 (GSGDTAAAPPSRGGKARPPGGGAA). A helical membrane pass occupies residues 272–292 (FTVFWIGLWSVLCFVSTFATV). Topologically, residues 293–308 (STFLIDMERFKYPERP) are cytoplasmic. Residues 309 to 329 (IIFLSACYLFVSVGYLVRLVA) traverse the membrane as a helical segment. At 330–393 (GHEKVACSGG…RYETTGPALC (64 aa)) the chain is on the extracellular side. A helical membrane pass occupies residues 394-414 (TVVFLLVYFFGMASSIWWVIL). Topologically, residues 415 to 436 (SLTWFLAAGMKWGNEAIAGYSQ) are cytoplasmic. The helical transmembrane segment at 437 to 457 (YFHLAAWLVPSVKSIAVLALS) threads the bilayer. Residues 458-480 (SVDGDPVAGICYVGNQSLDNLRG) lie on the Extracellular side of the membrane. N-linked (GlcNAc...) asparagine glycosylation is present at asparagine 472. The chain crosses the membrane as a helical span at residues 481 to 501 (FVLAPLVIYLFIGTMFLLAGF). Residues 502 to 529 (VSLFRIRSVIKQQGGPTKTHKLEKLMIR) lie on the Cytoplasmic side of the membrane. Residues 530 to 550 (LGLFTVLYTVPAAVVVACLFY) form a helical membrane-spanning segment. Residues 551-581 (EQHNRPRWEATHNCPCLRDLQPDQARRPDYA) are Extracellular-facing. Residues 582 to 602 (VFMLKYFMCLVVGITSGVWVW) form a helical membrane-spanning segment. The Cytoplasmic segment spans residues 603–684 (SGKTLESWRA…YPKQMPLSQV (82 aa)). The Lys-Thr-X-X-X-Trp motif, mediates interaction with the PDZ domain of Dvl family members signature appears at 605–610 (KTLESW). A compositionally biased stretch (gly residues) spans 630–654 (AGGSGPGGGGPGPGGGGGHGGGGGS). The interval 630 to 655 (AGGSGPGGGGPGPGGGGGHGGGGGSL) is disordered. The PDZ-binding motif lies at 682 to 684 (SQV).

It belongs to the G-protein coupled receptor Fz/Smo family. As to quaternary structure, component of a Wnt-signaling complex that contains a WNT protein, a FZD protein and LRP5 or LRP6. Interacts directly with LRP5 or LRP6; the interaction is promoted by Wnt-binding and signaling and inhibited by DKK1. Interacts (via the PDZ-binding motif) with GPOC (via its PDZ domain). Interacts with RSPO1 and RSPO3. Interacts with glypican GPC3. In terms of processing, ubiquitinated by ZNRF3, leading to its degradation by the proteasome.

The protein localises to the membrane. Its subcellular location is the golgi apparatus. The protein resides in the cell membrane. In terms of biological role, receptor for Wnt proteins. Component of the Wnt-Fzd-LRP5-LRP6 complex that triggers beta-catenin signaling through inducing aggregation of receptor-ligand complexes into ribosome-sized signalosomes. The beta-catenin canonical signaling pathway leads to the activation of disheveled proteins, inhibition of GSK-3 kinase, nuclear accumulation of beta-catenin and activation of Wnt target genes. A second signaling pathway involving PKC and calcium fluxes has been seen for some family members, but it is not yet clear if it represents a distinct pathway or if it can be integrated in the canonical pathway, as PKC seems to be required for Wnt-mediated inactivation of GSK-3 kinase. Both pathways seem to involve interactions with G-proteins. May be involved in transduction and intercellular transmission of polarity information during tissue morphogenesis and/or in differentiated tissues. Coreceptor along with RYK of Wnt proteins, such as WNT1. This is Frizzled-8 (Fzd8) from Rattus norvegicus (Rat).